The following is a 395-amino-acid chain: Na(+)/H(+) antiporter NhaA (395 aa).

The next 12 membrane-spanning stretches (helical) occupy residues 18 to 38 (AGGI…NSPL), 64 to 84 (LLMW…GLEV), 100 to 120 (IFPA…YWLV), 129 to 149 (GGWA…LVLL), 160 to 180 (FLLA…ALFF), 182 to 202 (HDLS…LILL), 205 to 225 (FKVS…VSVL), 226 to 246 (KSGV…PLKG), 266 to 286 (FLIL…GLGM), 295 to 315 (LGVT…FSYL), 333 to 353 (IFAV…LASL), and 368 to 388 (LGIL…LFVT).

This sequence belongs to the NhaA Na(+)/H(+) (TC 2.A.33) antiporter family.

The protein resides in the cell inner membrane. The catalysed reaction is Na(+)(in) + 2 H(+)(out) = Na(+)(out) + 2 H(+)(in). Na(+)/H(+) antiporter that extrudes sodium in exchange for external protons. This Histophilus somni (strain 129Pt) (Haemophilus somnus) protein is Na(+)/H(+) antiporter NhaA.